The primary structure comprises 1026 residues: Adenylate-forming reductase 06235 (1026 aa).

The interval 37–422 (FEFHAKANPD…LGRIDNQVKI (386 aa)) is adenylation (A) domain. AMP-binding positions include 332-333 (VT) and 412-415 (HLGR). The tract at residues 556 to 638 (SLVSTVGSTV…ALFIWILVTK (83 aa)) is thiolation and peptide carrier (T) domain. The segment at 682–901 (CIRRVCARIY…PPTKMWVKGV (220 aa)) is reductase (R) domain. Residues 685–688 (RVCA), 769–771 (TAL), and Y840 each bind NADP(+).

Belongs to the adenylate-forming reductase family.

Adenylate-forming reductase, a natural product biosynthesis enzyme that resembles non-ribosomal peptide synthetases, yet serves to modify one substrate, rather than to condense two or more building blocks. The A-domain preferentially accepts L-serine, L-alanine and L-valine as substrates. The natural product of the enzyme is not yet known. In Coprinopsis cinerea (strain Okayama-7 / 130 / ATCC MYA-4618 / FGSC 9003) (Inky cap fungus), this protein is Adenylate-forming reductase 06235.